The following is a 663-amino-acid chain: Probable peptidyl-glycine alpha-amidating monooxygenase pamn-1 (663 aa).

The N-terminal stretch at 1–21 is a signal peptide; sequence MNDRISINLIYLVLTFCCVSA. The tract at residues 1–300 is peptidylglycine alpha-hydroxylating monooxygenase; that stretch reads MNDRISINLI…YDAKLDNPYP (300 aa). Cu(2+)-binding residues include H75 and H76. A disulfide bond links C82 and C98. Residue H142 coordinates Cu(2+). A glycan (N-linked (GlcNAc...) asparagine) is linked at N191. Intrachain disulfides connect C194-C305 and C261-C283. The Cu(2+) site is built by H210 and H212. N269 is a glycosylation site (N-linked (GlcNAc...) asparagine). M282 contributes to the Cu(2+) binding site. Positions 301-663 are peptidyl-alpha-hydroxyglycine alpha-amidating lyase; sequence QGAICAKDYP…WQFKIRHDQN (363 aa). R376 contacts a protein. N411 carries an N-linked (GlcNAc...) asparagine glycan. 4 NHL repeats span residues 411 to 454, 464 to 507, 511 to 554, and 626 to 656; these read NQTK…WKIE, SGEL…LDLN, IRQF…MTTQ, and FGQP…LWQF. A disulfide bridge links C478 with C497. A protein-binding residues include Y496 and R543.

In the C-terminal section; belongs to the peptidyl-alpha-hydroxyglycine alpha-amidating lyase family. The protein in the N-terminal section; belongs to the copper type II ascorbate-dependent monooxygenase family. In terms of assembly, monomer. It depends on Zn(2+) as a cofactor. Requires Cu(2+) as cofactor.

Its subcellular location is the secreted. The catalysed reaction is a [peptide]-C-terminal glycine + 2 L-ascorbate + O2 = a [peptide]-C-terminal (2S)-2-hydroxyglycine + 2 monodehydro-L-ascorbate radical + H2O. The enzyme catalyses a [peptide]-C-terminal (2S)-2-hydroxyglycine = a [peptide]-C-terminal amide + glyoxylate. Probable bifunctional enzyme that catalyzes 2 sequential steps in C-terminal alpha-amidation of peptides. The monooxygenase part produces an unstable peptidyl(2-hydroxyglycine) intermediate that is dismutated to glyoxylate and the corresponding desglycine peptide amide by the lyase part. C-terminal amidation of peptides such as neuropeptides is essential for full biological activity. This chain is Probable peptidyl-glycine alpha-amidating monooxygenase pamn-1, found in Caenorhabditis elegans.